The chain runs to 94 residues: MSRSLKKGPFVFYSLIKKVDQMNSNRFKSVILTWSRSCTIIPIMIGNTIGVYNGKEHIPVLVSDQMIGHKLGEFVQTRNYRGHKKHDKKTKTKR.

It belongs to the universal ribosomal protein uS19 family.

The protein localises to the plastid. It localises to the chloroplast. Protein S19 forms a complex with S13 that binds strongly to the 16S ribosomal RNA. This Euglena gracilis protein is Small ribosomal subunit protein uS19c (rps19).